Reading from the N-terminus, the 508-residue chain is MNNTNTNTNNKNLASSSASVIFSKYINNNNNKLIPFKIKNSDLGRTRYFPPISKEWKNSIYVFNHNNLKNLPLFDININSLIKDYFNLQFKDKILFKKKRLSKVKVVSLNKIYASKAEIKHTNTKAILTVYTFNREKISLYKKIKKLKKSFYFVFDKIISFSERVILSGVPIRVDKDGKVLSNLYLPFRLRGVLPWITESHVNIWRKIIIASLYKELILLRKYKLRLDLNKYKFEEKLLYRLNNLIMKYYNKKVEFNIVNMRSFLLNSDILTKILALKLKNRNARVIKIMDVILNKANLPKINRVQEKASLIKSVDWNLLENKFKNLNLSFILNDASYAERNNLSELLNKLYYNVLLVSQKGVWALRSPKGEQPSFHSKSGGSPTKFIQKGAGAASLGGNAKAQPKVSSFAKAKKYAKIYQIIFNSINYKNMGGLRLEIKGRLTKRYRADRSLFKVKWKGGLKNLDSSYKGLSSVNMRGYAKPNVEYSIFTSKRRIGAFAVKGWVSGK.

Belongs to the universal ribosomal protein uS3 family. In terms of assembly, component of the mitochondrial small ribosomal subunit (mt-SSU). Mature N.crassa 74S mitochondrial ribosomes consist of a small (37S) and a large (54S) subunit. The 37S small subunit contains a 16S ribosomal RNA (16S mt-rRNA) and 32 different proteins. The 54S large subunit contains a 23S rRNA (23S mt-rRNA) and 42 different proteins. uS3m, uS4m and uS5m form the narrow entry site of the mRNA channel.

The protein resides in the mitochondrion. Functionally, component of the mitochondrial ribosome (mitoribosome), a dedicated translation machinery responsible for the synthesis of mitochondrial genome-encoded proteins, including at least some of the essential transmembrane subunits of the mitochondrial respiratory chain. The mitoribosomes are attached to the mitochondrial inner membrane and translation products are cotranslationally integrated into the membrane. uS3m is essential for mitochondrial protein synthesis and required for the maturation of small ribosomal subunits. The sequence is that of Small ribosomal subunit protein uS3m (var1) from Neurospora crassa (strain ATCC 24698 / 74-OR23-1A / CBS 708.71 / DSM 1257 / FGSC 987).